The following is an 805-amino-acid chain: Leucine--tRNA ligase (805 aa).

Residues 40-51 carry the 'HIGH' region motif; it reads PYPSGSGLHVGH. The short motif at 576–580 is the 'KMSKS' region element; that stretch reads KMSKS. K579 is an ATP binding site.

It belongs to the class-I aminoacyl-tRNA synthetase family.

It localises to the cytoplasm. The catalysed reaction is tRNA(Leu) + L-leucine + ATP = L-leucyl-tRNA(Leu) + AMP + diphosphate. The chain is Leucine--tRNA ligase from Chlorobium limicola (strain DSM 245 / NBRC 103803 / 6330).